We begin with the raw amino-acid sequence, 491 residues long: Ketol-acid reductoisomerase (NADP(+)) (491 aa).

Residues alanine 15–serine 208 form the KARI N-terminal Rossmann domain. Residues cysteine 45 to glutamine 48, arginine 68, arginine 76, serine 78, and aspartate 108 to glutamine 110 contribute to the NADP(+) site. Residue histidine 132 is part of the active site. Glycine 158 contributes to the NADP(+) binding site. KARI C-terminal knotted domains are found at residues serine 209–glutamine 344 and phenylalanine 345–methionine 484. Positions 217, 221, 389, and 393 each coordinate Mg(2+). Serine 414 contacts substrate.

The protein belongs to the ketol-acid reductoisomerase family. It depends on Mg(2+) as a cofactor.

It catalyses the reaction (2R)-2,3-dihydroxy-3-methylbutanoate + NADP(+) = (2S)-2-acetolactate + NADPH + H(+). It carries out the reaction (2R,3R)-2,3-dihydroxy-3-methylpentanoate + NADP(+) = (S)-2-ethyl-2-hydroxy-3-oxobutanoate + NADPH + H(+). It participates in amino-acid biosynthesis; L-isoleucine biosynthesis; L-isoleucine from 2-oxobutanoate: step 2/4. It functions in the pathway amino-acid biosynthesis; L-valine biosynthesis; L-valine from pyruvate: step 2/4. Functionally, involved in the biosynthesis of branched-chain amino acids (BCAA). Catalyzes an alkyl-migration followed by a ketol-acid reduction of (S)-2-acetolactate (S2AL) to yield (R)-2,3-dihydroxy-isovalerate. In the isomerase reaction, S2AL is rearranged via a Mg-dependent methyl migration to produce 3-hydroxy-3-methyl-2-ketobutyrate (HMKB). In the reductase reaction, this 2-ketoacid undergoes a metal-dependent reduction by NADPH to yield (R)-2,3-dihydroxy-isovalerate. This is Ketol-acid reductoisomerase (NADP(+)) from Salmonella dublin (strain CT_02021853).